The following is a 59-amino-acid chain: UPF0391 membrane protein LPC_1949 (59 aa).

2 helical membrane passes run 5-25 and 30-50; these read ALIF…GIAV and IAKI…IMGL.

This sequence belongs to the UPF0391 family.

The protein localises to the cell membrane. The protein is UPF0391 membrane protein LPC_1949 of Legionella pneumophila (strain Corby).